The following is a 144-amino-acid chain: Large ribosomal subunit protein uL16 (144 aa).

This sequence belongs to the universal ribosomal protein uL16 family. Part of the 50S ribosomal subunit.

Binds 23S rRNA and is also seen to make contacts with the A and possibly P site tRNAs. This is Large ribosomal subunit protein uL16 from Latilactobacillus sakei subsp. sakei (strain 23K) (Lactobacillus sakei subsp. sakei).